The following is a 385-amino-acid chain: 1-deoxy-D-xylulose 5-phosphate reductoisomerase (385 aa).

6 residues coordinate NADPH: Thr10, Gly11, Ser12, Ile13, Lys37, and Asn124. Lys125 contributes to the 1-deoxy-D-xylulose 5-phosphate binding site. Residue Glu126 participates in NADPH binding. Asp150 provides a ligand contact to Mn(2+). Ser151, Glu152, Ser176, and His199 together coordinate 1-deoxy-D-xylulose 5-phosphate. Glu152 is a Mn(2+) binding site. Gly205 lines the NADPH pocket. Ser212, Asn217, Lys218, and Glu221 together coordinate 1-deoxy-D-xylulose 5-phosphate. Glu221 serves as a coordination point for Mn(2+).

The protein belongs to the DXR family. Requires Mg(2+) as cofactor. Mn(2+) serves as cofactor.

It catalyses the reaction 2-C-methyl-D-erythritol 4-phosphate + NADP(+) = 1-deoxy-D-xylulose 5-phosphate + NADPH + H(+). Its pathway is isoprenoid biosynthesis; isopentenyl diphosphate biosynthesis via DXP pathway; isopentenyl diphosphate from 1-deoxy-D-xylulose 5-phosphate: step 1/6. In terms of biological role, catalyzes the NADPH-dependent rearrangement and reduction of 1-deoxy-D-xylulose-5-phosphate (DXP) to 2-C-methyl-D-erythritol 4-phosphate (MEP). The polypeptide is 1-deoxy-D-xylulose 5-phosphate reductoisomerase (Clostridium botulinum (strain ATCC 19397 / Type A)).